A 279-amino-acid chain; its full sequence is Prepilin leader peptidase/N-methyltransferase (279 aa).

Over 1–16 (MDDLREFAQLFPAWWF) the chain is Periplasmic. A helical transmembrane segment spans residues 17-35 (GALGVLGLIVGSFLNVVIY). At 36–104 (RLPIMLERRW…RSRCCHQSVS (69 aa)) the chain is on the cytoplasmic side. The helical transmembrane segment at 105 to 123 (VQYPLVEVITMLAFLAAGL) threads the bilayer. The Periplasmic segment spans residues 124-130 (LWLPGMA). A helical membrane pass occupies residues 131 to 149 (LWGALILLSFLLVLTVIDI). The Cytoplasmic segment spans residues 150–163 (KTLLLPDELTLSLL). Residues 164–182 (WMGLLFNLSGTFVSLNDAV) form a helical membrane-spanning segment. Topologically, residues 183–185 (VGA) are periplasmic. A helical membrane pass occupies residues 186–204 (MAGYLSLWLLYWAFKYATG). At 205 to 214 (KEALGYGDFK) the chain is on the cytoplasmic side. The helical transmembrane segment at 215–233 (LLAALGAWLGWQALPNLVL) threads the bilayer. At 234–236 (VAA) the chain is on the periplasmic side. The helical transmembrane segment at 237–254 (LSGLVVTLIWRGLRKEDT) threads the bilayer. The Cytoplasmic portion of the chain corresponds to 255 to 257 (AKP). Residues 258 to 276 (LAFGPWLAIGGVFGMIMNG) traverse the membrane as a helical segment. The Periplasmic portion of the chain corresponds to 277-279 (FNL).

Belongs to the peptidase A24 family.

The protein localises to the cell inner membrane. The catalysed reaction is Typically cleaves a -Gly-|-Phe- bond to release an N-terminal, basic peptide of 5-8 residues from type IV prepilin, and then N-methylates the new N-terminal amino group, the methyl donor being S-adenosyl-L-methionine.. In terms of biological role, plays a role in type II pseudopili formation by proteolytically removing the leader sequence from substrate proteins and subsequently monomethylating the alpha-amino group of the newly exposed N-terminal phenylalanine. Substrates include proteins required for biogenesis of the type II general secretory apparatus. The polypeptide is Prepilin leader peptidase/N-methyltransferase (outO) (Pectobacterium carotovorum subsp. carotovorum (Erwinia carotovora subsp. carotovora)).